We begin with the raw amino-acid sequence, 302 residues long: Probable alpha-L-glutamate ligase (302 aa).

The ATP-grasp domain maps to 104–287 (MQLLSRKGIG…IAGMVFEFLE (184 aa)). Residues K141, 178–179 (EF), D187, and 211–213 (RSN) contribute to the ATP site. 3 residues coordinate Mg(2+): D248, E260, and N262. D248, E260, and N262 together coordinate Mn(2+).

This sequence belongs to the RimK family. Mg(2+) is required as a cofactor. It depends on Mn(2+) as a cofactor.

The sequence is that of Probable alpha-L-glutamate ligase from Psychromonas ingrahamii (strain DSM 17664 / CCUG 51855 / 37).